The chain runs to 232 residues: Thrombin-like enzyme bothrombin (232 aa).

Residues 1–223 form the Peptidase S1 domain; that stretch reads VIGGDECDIN…YLPWIQSIIA (223 aa). Cystine bridges form between Cys7–Cys139, Cys26–Cys42, Cys74–Cys230, Cys118–Cys184, Cys150–Cys163, and Cys174–Cys199. Catalysis depends on charge relay system residues His41 and Asp86. N-linked (GlcNAc...) asparagine glycans are attached at residues Asn98 and Asn146. Ser178 acts as the Charge relay system in catalysis. An N-linked (GlcNAc...) asparagine glycan is attached at Asn225.

The protein belongs to the peptidase S1 family. Snake venom subfamily. In terms of assembly, monomer. In terms of tissue distribution, expressed by the venom gland.

It is found in the secreted. It catalyses the reaction Selective cleavage of Arg-|-Xaa bond in fibrinogen, to form fibrin, and release fibrinopeptide A. The specificity of further degradation of fibrinogen varies with species origin of the enzyme.. With respect to regulation, inhibited by diisopropylfluorophosphate (DFP), but not by hirudin. Functionally, thrombin-like snake venom serine protease that clots fibrinogen by releasing fibrinopeptide A from the alpha chain of fibrinogen (FGA), induces platelet aggregation through its interaction with GPIb (GP1BA/GP1BB), and activates factor VIII (F8). This chain is Thrombin-like enzyme bothrombin, found in Bothrops jararaca (Jararaca).